We begin with the raw amino-acid sequence, 165 residues long: Ribosome maturation factor RimM (165 aa).

The region spanning Glu-94–Arg-163 is the PRC barrel domain.

It belongs to the RimM family. As to quaternary structure, binds ribosomal protein uS19.

The protein resides in the cytoplasm. An accessory protein needed during the final step in the assembly of 30S ribosomal subunit, possibly for assembly of the head region. Essential for efficient processing of 16S rRNA. May be needed both before and after RbfA during the maturation of 16S rRNA. It has affinity for free ribosomal 30S subunits but not for 70S ribosomes. This chain is Ribosome maturation factor RimM, found in Rickettsia akari (strain Hartford).